A 393-amino-acid polypeptide reads, in one-letter code: Xylose transport system permease protein XylH (393 aa).

The Periplasmic portion of the chain corresponds to 1–24; the sequence is MSKSNPSEVKLAVPTSGGFSGLKS. The chain crosses the membrane as a helical span at residues 25–45; the sequence is LNLQVFVMIAAIIAIMLFFTW. Over 46 to 64 the chain is Cytoplasmic; sequence TTDGAYLSARNVSNLLRQT. Residues 65 to 85 traverse the membrane as a helical segment; that stretch reads AITGILAVGMVFVIISAEIDL. Residues 86-102 lie on the Periplasmic side of the membrane; it reads SVGSMMGLLGGVAAICD. Residues 103–123 form a helical membrane-spanning segment; sequence VWLGWPLPLTIIVTLVLGLLL. Residues 124-135 lie on the Cytoplasmic side of the membrane; the sequence is GAWNGWWVAYRK. A helical membrane pass occupies residues 136–156; it reads VPSFIVTLAGMLAFRGILIGI. The Periplasmic portion of the chain corresponds to 157–175; sequence TNGTTVSPTSAAMSQIGQS. The helical transmembrane segment at 176–196 threads the bilayer; it reads YLPASTGFIIGALGLMAFVGW. Residues 197 to 214 are Cytoplasmic-facing; it reads QWRGRMRRQALGLQSPAS. A helical membrane pass occupies residues 215–235; that stretch reads TAVVGRQALTAIIVLGAIWLL. The Periplasmic segment spans residues 236-239; that stretch reads NDYR. Residues 240–260 traverse the membrane as a helical segment; the sequence is GVPTPVLLLTLLLLGGMFMAT. The Cytoplasmic portion of the chain corresponds to 261–287; sequence RTAFGRRIYAIGGNLEAARLSGINVER. The chain crosses the membrane as a helical span at residues 288 to 308; that stretch reads TKLAVFAINGLMVAIAGLILS. Residues 309–312 lie on the Periplasmic side of the membrane; sequence SRLG. The helical transmembrane segment at 313 to 333 threads the bilayer; sequence AGSPSAGNIAELDAIAACVIG. Over 334-336 the chain is Cytoplasmic; sequence GTS. The chain crosses the membrane as a helical span at residues 337-357; sequence LAGGVGSVAGAVMGAFIMASL. At 358 to 365 the chain is on the periplasmic side; sequence DNGMSMMD. Residues 366–386 traverse the membrane as a helical segment; it reads VPTFWQYIVKGAILLLAVWMD. The Cytoplasmic portion of the chain corresponds to 387–393; the sequence is SATKRRS.

Belongs to the binding-protein-dependent transport system permease family. AraH/RbsC subfamily.

Its subcellular location is the cell inner membrane. Functionally, part of the binding-protein-dependent transport system for D-xylose. Probably responsible for the translocation of the substrate across the membrane. This is Xylose transport system permease protein XylH (xylH) from Escherichia coli O6:H1 (strain CFT073 / ATCC 700928 / UPEC).